The following is a 187-amino-acid chain: UPF0301 protein Clim_0777 (187 aa).

This sequence belongs to the UPF0301 (AlgH) family.

The polypeptide is UPF0301 protein Clim_0777 (Chlorobium limicola (strain DSM 245 / NBRC 103803 / 6330)).